A 150-amino-acid chain; its full sequence is Transcriptional repressor NrdR (150 aa).

The interval 1 to 22 is disordered; the sequence is MKCPYCSAPDSRVVNSRPSDDG. Residues 3–34 fold into a zinc finger; the sequence is CPYCSAPDSRVVNSRPSDDGASIRRRRECLRC. Residues 49–136 enclose the ATP-cone domain; that stretch reads LMVLKRGGQR…VYRDFDSLER (88 aa).

Belongs to the NrdR family. Requires Zn(2+) as cofactor.

Its function is as follows. Negatively regulates transcription of bacterial ribonucleotide reductase nrd genes and operons by binding to NrdR-boxes. In Deinococcus geothermalis (strain DSM 11300 / CIP 105573 / AG-3a), this protein is Transcriptional repressor NrdR.